A 157-amino-acid chain; its full sequence is Large ribosomal subunit protein eL24 (157 aa).

Lys-2 participates in a covalent cross-link: Glycyl lysine isopeptide (Lys-Gly) (interchain with G-Cter in SUMO2). Residue Glu-4 is modified to ADP-ribosyl glutamic acid. Lys-27 carries the post-translational modification N6-acetyllysine; alternate. Lys-27 is covalently cross-linked (Glycyl lysine isopeptide (Lys-Gly) (interchain with G-Cter in SUMO2); alternate). Residue Lys-35 forms a Glycyl lysine isopeptide (Lys-Gly) (interchain with G-Cter in SUMO2) linkage. An N6-acetyllysine modification is found at Lys-77. The residue at position 83 (Thr-83) is a Phosphothreonine. The residue at position 86 (Ser-86) is a Phosphoserine. At Lys-93 the chain carries N6-acetyllysine. Residues 106–117 (EQAIRAAKEAKK) are compositionally biased toward basic and acidic residues. A disordered region spans residues 106–157 (EQAIRAAKEAKKAKQASKKTAMAAAKAPTKAAPKQKIVKPVKVSAPRVGGKR). Low complexity predominate over residues 123-140 (KKTAMAAAKAPTKAAPKQ). Lys-131 is subject to N6-succinyllysine. Lys-147 participates in a covalent cross-link: Glycyl lysine isopeptide (Lys-Gly) (interchain with G-Cter in SUMO2). The residue at position 149 (Ser-149) is a Phosphoserine.

Belongs to the eukaryotic ribosomal protein eL24 family. Component of the large ribosomal subunit. Post-translationally, mono-ADP-ribosylation at Glu-4 by PARP16 inhibits polysome assembly and mRNA loading, thereby inhibiting protein translation.

The protein resides in the cytoplasm. Functionally, component of the large ribosomal subunit. The ribosome is a large ribonucleoprotein complex responsible for the synthesis of proteins in the cell. This is Large ribosomal subunit protein eL24 (RPL24) from Bos taurus (Bovine).